A 445-amino-acid polypeptide reads, in one-letter code: Transcription activator AFTR-1 (445 aa).

The segment at residues 17–44 (CDFCTQSKLRCNKNKPSCRRCTLQQQPC) is a DNA-binding region (zn(2)-C6 fungal-type). The tract at residues 50–89 (RRTGRPPKHPRKANDCQEANGQHGDQDPVTSTPGGSYQQQ) is disordered. Basic residues predominate over residues 51-60 (RTGRPPKHPR). The span at 77–89 (PVTSTPGGSYQQQ) shows a compositional bias: polar residues.

The protein localises to the nucleus. In terms of biological role, transcription factor that regulates the expression of the gene clusters that mediate the biosynthesis of the host-selective toxins (HSTs) AF-toxins responsible for Alternaria black spot of strawberry disease by the strawberry pathotype. On cellular level, AF-toxins affect plasma membrane of susceptible cells and cause a sudden increase in loss of K(+) after a few minutes of toxin treatment. The protein is Transcription activator AFTR-1 of Alternaria alternata (Alternaria rot fungus).